The chain runs to 702 residues: Neurochondrin (702 aa).

It belongs to the neurochondrin family.

The protein localises to the cytoplasm. It is found in the cytosol. It localises to the cell projection. Its subcellular location is the dendrite. The protein resides in the postsynapse. Its function is as follows. Probably involved in signal transduction, in the nervous system. Required for the spatial learning process. May also be involved in neurite outgrowth. The chain is Neurochondrin (NCDN) from Gallus gallus (Chicken).